The sequence spans 244 residues: Protein crossbronx (244 aa).

A UBC core domain is found at 20–176; the sequence is QQEYKILAEY…VQENIKESKE (157 aa). Residues 209 to 244 are disordered; that stretch reads AGRSKQTEPSAQQGNGGHATGLSWVKEGEFKPLSIE.

It belongs to the ubiquitin-conjugating enzyme family. FTS subfamily.

In Drosophila simulans (Fruit fly), this protein is Protein crossbronx (cbx).